A 1937-amino-acid chain; its full sequence is Myosin-8 (1937 aa).

One can recognise a Myosin N-terminal SH3-like domain in the interval 35–84 (DAKTSVFVAEPKESYVKSTIQSKEGGKVTVKTEGGATLTVREDQVFPMNP). A phosphothreonine mark is found at Thr-66 and Thr-71. In terms of domain architecture, Myosin motor spans 88–781 (DKIEDMAMMT…LLGLLEEMRD (694 aa)). Residue Lys-132 is modified to N6,N6,N6-trimethyllysine. ATP is bound at residue 181–188 (GESGAGKT). Tyr-389 carries the post-translational modification Phosphotyrosine. Ser-392 is subject to Phosphoserine. Position 419 is a phosphothreonine (Thr-419). The residue at position 424 (Tyr-424) is a Phosphotyrosine. Ser-625 carries the phosphoserine modification. Positions 658 to 680 (LNKLMTNLRSTHPHFVRCIIPNE) are actin-binding. The residue at position 756 (His-756) is a Pros-methylhistidine. Positions 760–774 (KFGHTKVFFKAGLLG) are actin-binding. The IQ domain occupies 781-813 (DEKLAQIITRTQAVCRGFLMRVEYQKMLQRREA). The stretch at 842–1937 (LLKSAETEKE…REVHTKISAE (1096 aa)) forms a coiled coil. Residues Ser-1091 and Ser-1095 each carry the phosphoserine modification. The segment at 1126–1146 (EAERASRAKAEKQRSDLSREL) is disordered. Over residues 1127–1146 (AERASRAKAEKQRSDLSREL) the composition is skewed to basic and acidic residues. A phosphoserine mark is found at Ser-1161, Ser-1236, Ser-1242, and Ser-1260. Residues Thr-1264 and Thr-1285 each carry the phosphothreonine modification. Phosphoserine occurs at positions 1291, 1302, and 1305. At Tyr-1463 the chain carries Phosphotyrosine. Thr-1466 is modified (phosphothreonine). Position 1473 is a phosphoserine (Ser-1473). Tyr-1491 bears the Phosphotyrosine mark. Ser-1494 carries the post-translational modification Phosphoserine. Thr-1500 bears the Phosphothreonine mark. Ser-1513 is subject to Phosphoserine. A Phosphothreonine modification is found at Thr-1516. Phosphoserine occurs at positions 1553, 1573, 1602, 1713, and 1725. Thr-1729 carries the phosphothreonine modification. Ser-1738 is subject to Phosphoserine.

It belongs to the TRAFAC class myosin-kinesin ATPase superfamily. Myosin family. In terms of assembly, muscle myosin is a hexameric protein that consists of 2 heavy chain subunits (MHC), 2 alkali light chain subunits (MLC) and 2 regulatory light chain subunits (MLC-2).

The protein resides in the cytoplasm. It is found in the myofibril. In terms of biological role, muscle contraction. This chain is Myosin-8 (MYH8), found in Homo sapiens (Human).